Here is a 269-residue protein sequence, read N- to C-terminus: Adenosylcobinamide-GDP ribazoletransferase (269 aa).

Helical transmembrane passes span 63–83, 87–107, 137–157, 158–178, 202–222, and 246–266; these read SAYY…LLYL, LPPG…TGML, VGAF…SLLG, AGLP…VVLM, LAFL…AALV, and VYGL…GWGF.

It belongs to the CobS family. Mg(2+) serves as cofactor.

The protein resides in the cell membrane. The catalysed reaction is alpha-ribazole + adenosylcob(III)inamide-GDP = adenosylcob(III)alamin + GMP + H(+). It catalyses the reaction alpha-ribazole 5'-phosphate + adenosylcob(III)inamide-GDP = adenosylcob(III)alamin 5'-phosphate + GMP + H(+). It participates in cofactor biosynthesis; adenosylcobalamin biosynthesis; adenosylcobalamin from cob(II)yrinate a,c-diamide: step 7/7. Its function is as follows. Joins adenosylcobinamide-GDP and alpha-ribazole to generate adenosylcobalamin (Ado-cobalamin). Also synthesizes adenosylcobalamin 5'-phosphate from adenosylcobinamide-GDP and alpha-ribazole 5'-phosphate. The protein is Adenosylcobinamide-GDP ribazoletransferase of Deinococcus radiodurans (strain ATCC 13939 / DSM 20539 / JCM 16871 / CCUG 27074 / LMG 4051 / NBRC 15346 / NCIMB 9279 / VKM B-1422 / R1).